The following is a 301-amino-acid chain: N-acetylmuramic acid 6-phosphate etherase (301 aa).

The region spanning 57–220 is the SIS domain; sequence IAETFMKNGR…TTGAMIKTGK (164 aa). Catalysis depends on E85, which acts as the Proton donor. E116 is an active-site residue.

This sequence belongs to the GCKR-like family. MurNAc-6-P etherase subfamily. As to quaternary structure, homodimer.

It catalyses the reaction N-acetyl-D-muramate 6-phosphate + H2O = N-acetyl-D-glucosamine 6-phosphate + (R)-lactate. It functions in the pathway amino-sugar metabolism; 1,6-anhydro-N-acetylmuramate degradation. The protein operates within amino-sugar metabolism; N-acetylmuramate degradation. It participates in cell wall biogenesis; peptidoglycan recycling. Functionally, specifically catalyzes the cleavage of the D-lactyl ether substituent of MurNAc 6-phosphate, producing GlcNAc 6-phosphate and D-lactate. Together with AnmK, is also required for the utilization of anhydro-N-acetylmuramic acid (anhMurNAc) either imported from the medium or derived from its own cell wall murein, and thus plays a role in cell wall recycling. The chain is N-acetylmuramic acid 6-phosphate etherase from Pasteurella multocida (strain Pm70).